A 213-amino-acid polypeptide reads, in one-letter code: MNKHNKSADALSLYLVTDSALCADKGLIETVLAAIDGGVTLVQLRDKHASDEALYTTACELKEAIAGRVPLVINDKVQIAHKAKLDGAHIGQGDLSVKQARNILGHDAWLGLSINTLAQLQQTHHHHLDLLDYVGLGPVFATATKQDHAEPIGLEGLSTLSKASVLPTVAIGGINHANARQVYQTGCHGIAVVSAICAADDPKQAAELLIAQR.

4-amino-2-methyl-5-(diphosphooxymethyl)pyrimidine contacts are provided by residues 43–47 (QLRDK) and asparagine 74. Mg(2+) contacts are provided by aspartate 75 and aspartate 94. Serine 113 is a binding site for 4-amino-2-methyl-5-(diphosphooxymethyl)pyrimidine. Residue 142 to 144 (TAT) participates in 2-[(2R,5Z)-2-carboxy-4-methylthiazol-5(2H)-ylidene]ethyl phosphate binding. Lysine 145 is a binding site for 4-amino-2-methyl-5-(diphosphooxymethyl)pyrimidine. 2-[(2R,5Z)-2-carboxy-4-methylthiazol-5(2H)-ylidene]ethyl phosphate is bound by residues glycine 173 and 193–194 (VS).

It belongs to the thiamine-phosphate synthase family. Mg(2+) serves as cofactor.

It catalyses the reaction 2-[(2R,5Z)-2-carboxy-4-methylthiazol-5(2H)-ylidene]ethyl phosphate + 4-amino-2-methyl-5-(diphosphooxymethyl)pyrimidine + 2 H(+) = thiamine phosphate + CO2 + diphosphate. The enzyme catalyses 2-(2-carboxy-4-methylthiazol-5-yl)ethyl phosphate + 4-amino-2-methyl-5-(diphosphooxymethyl)pyrimidine + 2 H(+) = thiamine phosphate + CO2 + diphosphate. It carries out the reaction 4-methyl-5-(2-phosphooxyethyl)-thiazole + 4-amino-2-methyl-5-(diphosphooxymethyl)pyrimidine + H(+) = thiamine phosphate + diphosphate. It participates in cofactor biosynthesis; thiamine diphosphate biosynthesis; thiamine phosphate from 4-amino-2-methyl-5-diphosphomethylpyrimidine and 4-methyl-5-(2-phosphoethyl)-thiazole: step 1/1. Condenses 4-methyl-5-(beta-hydroxyethyl)thiazole monophosphate (THZ-P) and 2-methyl-4-amino-5-hydroxymethyl pyrimidine pyrophosphate (HMP-PP) to form thiamine monophosphate (TMP). In Psychrobacter sp. (strain PRwf-1), this protein is Thiamine-phosphate synthase.